A 120-amino-acid chain; its full sequence is Aspartate 1-decarboxylase (120 aa).

Residue S25 is the Schiff-base intermediate with substrate; via pyruvic acid of the active site. S25 bears the Pyruvic acid (Ser) mark. Position 57 (T57) interacts with substrate. Y58 (proton donor) is an active-site residue. Residue 73-75 (GAA) participates in substrate binding.

This sequence belongs to the PanD family. In terms of assembly, heterooctamer of four alpha and four beta subunits. Pyruvate is required as a cofactor. Post-translationally, is synthesized initially as an inactive proenzyme, which is activated by self-cleavage at a specific serine bond to produce a beta-subunit with a hydroxyl group at its C-terminus and an alpha-subunit with a pyruvoyl group at its N-terminus.

The protein localises to the cytoplasm. The enzyme catalyses L-aspartate + H(+) = beta-alanine + CO2. Its pathway is cofactor biosynthesis; (R)-pantothenate biosynthesis; beta-alanine from L-aspartate: step 1/1. Catalyzes the pyruvoyl-dependent decarboxylation of aspartate to produce beta-alanine. The chain is Aspartate 1-decarboxylase from Ralstonia pickettii (strain 12J).